The following is a 105-amino-acid chain: Endogenous retrovirus group K member 8 Rec protein (105 aa).

The segment at 1–48 (MNPSEMQRKAPPRRRRHRNRAPLTHKMNKMVTSEEQMKLPSTKKAEPP) is disordered. The span at 10-20 (APPRRRRHRNR) shows a compositional bias: basic residues. The short motif at 13–20 (RRRRHRNR) is the Nuclear localization signal element. The Nuclear export signal motif lies at 50 to 59 (WAQLKKLTQL).

As to quaternary structure, forms homodimers, homotrimers, and homotetramers via a C-terminal domain. Associates with XPO1 and with ZNF145.

The protein resides in the cytoplasm. The protein localises to the nucleus. Its subcellular location is the nucleolus. Functionally, retroviral replication requires the nuclear export and translation of unspliced, singly-spliced and multiply-spliced derivatives of the initial genomic transcript. Rec interacts with a highly structured RNA element (RcRE) present in the viral 3'LTR and recruits the cellular nuclear export machinery. This permits export to the cytoplasm of unspliced genomic or incompletely spliced subgenomic viral transcripts. In Homo sapiens (Human), this protein is Endogenous retrovirus group K member 8 Rec protein (ERVK-8).